Reading from the N-terminus, the 182-residue chain is UPF0200 protein Mthe_1012 (182 aa).

Position 8–15 (8–15) interacts with ATP; sequence GMPGSGKS.

This sequence belongs to the UPF0200 family.

The polypeptide is UPF0200 protein Mthe_1012 (Methanothrix thermoacetophila (strain DSM 6194 / JCM 14653 / NBRC 101360 / PT) (Methanosaeta thermophila)).